A 101-amino-acid polypeptide reads, in one-letter code: Large ribosomal subunit protein uL24 (101 aa).

This sequence belongs to the universal ribosomal protein uL24 family. As to quaternary structure, part of the 50S ribosomal subunit.

Functionally, one of two assembly initiator proteins, it binds directly to the 5'-end of the 23S rRNA, where it nucleates assembly of the 50S subunit. One of the proteins that surrounds the polypeptide exit tunnel on the outside of the subunit. The chain is Large ribosomal subunit protein uL24 from Streptococcus pyogenes serotype M2 (strain MGAS10270).